The chain runs to 392 residues: Bone morphogenetic protein 15 (392 aa).

Residues 1–25 (MALLTILRILLWGVVLFMEQRVQMA) form the signal peptide. A propeptide spanning residues 26–267 (KPGWPSTALL…ESSFLMRSVR (242 aa)) is cleaved from the precursor. N-linked (GlcNAc...) asparagine glycans are attached at residues asparagine 85, asparagine 213, asparagine 236, asparagine 349, and asparagine 373. 3 disulfide bridges follow: cysteine 291/cysteine 357, cysteine 320/cysteine 389, and cysteine 324/cysteine 391.

This sequence belongs to the TGF-beta family. In terms of assembly, homodimer. But, in contrast to other members of this family, cannot be disulfide-linked. Ovary specific.

It is found in the secreted. May be involved in follicular development. Oocyte-specific growth/differentiation factor that stimulates folliculogenesis and granulosa cell (GC) growth. This is Bone morphogenetic protein 15 (Bmp15) from Mus musculus (Mouse).